The sequence spans 262 residues: 5'-nucleotidase SurE (262 aa).

4 residues coordinate a divalent metal cation: Asp-11, Asp-12, Ser-43, and Asn-101.

The protein belongs to the SurE nucleotidase family. A divalent metal cation is required as a cofactor.

The protein localises to the cytoplasm. It catalyses the reaction a ribonucleoside 5'-phosphate + H2O = a ribonucleoside + phosphate. In terms of biological role, nucleotidase that shows phosphatase activity on nucleoside 5'-monophosphates. This Prochlorococcus marinus (strain NATL1A) protein is 5'-nucleotidase SurE.